Consider the following 963-residue polypeptide: Ubiquitin carboxyl-terminal hydrolase 11 (963 aa).

Residues 64-93 are disordered; it reads VTEDREPQHEELPGLDSQWRQIENGESGRE. Residues 65–75 show a composition bias toward basic and acidic residues; it reads TEDREPQHEEL. The DUSP domain maps to 76–184; it reads PGLDSQWRQI…GQPPIERKVI (109 aa). Lysine 245 is subject to N6-acetyllysine. One can recognise a USP domain in the interval 309 to 930; the sequence is CGLTNLGNTC…AAYVLFYQRQ (622 aa). Cysteine 318 acts as the Nucleophile in catalysis. Disordered regions lie at residues 644-691 and 716-735; these read TKPN…SGVT and LFTLQTVNSNGTSDRTTSPE. Residue serine 648 is modified to Phosphoserine. The segment covering 649–665 has biased composition (acidic residues); it reads DDEDDGDEKEDDEEDKD. Over residues 717 to 731 the composition is skewed to polar residues; that stretch reads FTLQTVNSNGTSDRT. Serine 733 carries the phosphoserine modification. Residue histidine 888 is the Proton acceptor of the active site. Over residues 938 to 957 the composition is skewed to low complexity; it reads SPAGSSGAPASPACSSPPSS. Positions 938-963 are disordered; it reads SPAGSSGAPASPACSSPPSSEFMDVN. Position 948 is a phosphoserine (serine 948).

It belongs to the peptidase C19 family. As to quaternary structure, monomer. Associated component of the Polycomb group (PcG) multiprotein PRC1-like complex. Interacts with RANBP9/RANBPM. Interacts with BRCA2. Interacts with CHUK/IKKA. Interacts with NFKBIA. Interacts with SPRY3, RAE1, MYCBP2/PAM, and KCTD6. In terms of assembly, (Microbial infection) Interacts with papilloma virus protein 16E7.

The protein localises to the nucleus. It localises to the cytoplasm. The protein resides in the chromosome. The catalysed reaction is Thiol-dependent hydrolysis of ester, thioester, amide, peptide and isopeptide bonds formed by the C-terminal Gly of ubiquitin (a 76-residue protein attached to proteins as an intracellular targeting signal).. In terms of biological role, protease that can remove conjugated ubiquitin from target proteins and polyubiquitin chains. Inhibits the degradation of target proteins by the proteasome. Cleaves preferentially 'Lys-6' and 'Lys-63'-linked ubiquitin chains. Has lower activity with 'Lys-11' and 'Lys-33'-linked ubiquitin chains, and extremely low activity with 'Lys-27', 'Lys-29' and 'Lys-48'-linked ubiquitin chains (in vitro). Plays a role in the regulation of pathways leading to NF-kappa-B activation. Plays a role in the regulation of DNA repair after double-stranded DNA breaks. Acts as a chromatin regulator via its association with the Polycomb group (PcG) multiprotein PRC1-like complex; may act by deubiquitinating components of the PRC1-like complex. Promotes cell proliferation by deubiquitinating phosphorylated E2F1. This is Ubiquitin carboxyl-terminal hydrolase 11 (USP11) from Homo sapiens (Human).